The chain runs to 357 residues: MATANLLDLNGRREMDKAKALESALAQIERQFGKGSIMKLGANSPVMEIEATSTGSLGLDIALGIGGLPKGRIIEIYGPESSGKTTLTLHVVAEEQKKGGVCAFVDAEHALDPQYAKKLGVNLDELLISQPDTGEQALEIVDTLVRSGAVNLIVVDSVAALTPKSEIEGDMGDMQMGSQARLMSQAMRKLTASIGRSNCMVIFINQIRMKIGVMFGNPETTTGGNALKFYASVRLDIRRTGAIKDRDNVIGNTTKVKVVKNKVAPPFREVEFDIMYGEGISKTGELVDLGVKAGVVEKSGSWYSYGDERIGQGRENAKAFLRANPTVAGDIEDRIRASHGLDFSTGEDGKGDDLVDM.

78 to 85 serves as a coordination point for ATP; sequence GPESSGKT.

It belongs to the RecA family.

Its subcellular location is the cytoplasm. Functionally, can catalyze the hydrolysis of ATP in the presence of single-stranded DNA, the ATP-dependent uptake of single-stranded DNA by duplex DNA, and the ATP-dependent hybridization of homologous single-stranded DNAs. It interacts with LexA causing its activation and leading to its autocatalytic cleavage. This Cereibacter sphaeroides (strain ATCC 17029 / ATH 2.4.9) (Rhodobacter sphaeroides) protein is Protein RecA.